The sequence spans 205 residues: Molybdenum cofactor guanylyltransferase (205 aa).

GTP-binding positions include 14-16, Lys27, Asp77, and Asp107; that span reads LAG. Mg(2+) is bound at residue Asp107.

This sequence belongs to the MobA family. In terms of assembly, monomer. Mg(2+) is required as a cofactor.

It is found in the cytoplasm. The catalysed reaction is Mo-molybdopterin + GTP + H(+) = Mo-molybdopterin guanine dinucleotide + diphosphate. Its function is as follows. Transfers a GMP moiety from GTP to Mo-molybdopterin (Mo-MPT) cofactor (Moco or molybdenum cofactor) to form Mo-molybdopterin guanine dinucleotide (Mo-MGD) cofactor. This Burkholderia cenocepacia (strain HI2424) protein is Molybdenum cofactor guanylyltransferase.